The chain runs to 91 residues: Small ribosomal subunit protein uS19 (91 aa).

Belongs to the universal ribosomal protein uS19 family.

In terms of biological role, protein S19 forms a complex with S13 that binds strongly to the 16S ribosomal RNA. This is Small ribosomal subunit protein uS19 from Dechloromonas aromatica (strain RCB).